A 208-amino-acid polypeptide reads, in one-letter code: Small ribosomal subunit protein uS4 (208 aa).

The 63-residue stretch at 95-157 folds into the S4 RNA-binding domain; sequence RRIDNIVYRA…DSLKKLIRSN (63 aa).

The protein belongs to the universal ribosomal protein uS4 family. Part of the 30S ribosomal subunit. Contacts protein S5. The interaction surface between S4 and S5 is involved in control of translational fidelity.

One of the primary rRNA binding proteins, it binds directly to 16S rRNA where it nucleates assembly of the body of the 30S subunit. Its function is as follows. With S5 and S12 plays an important role in translational accuracy. The protein is Small ribosomal subunit protein uS4 of Borrelia garinii subsp. bavariensis (strain ATCC BAA-2496 / DSM 23469 / PBi) (Borreliella bavariensis).